A 289-amino-acid chain; its full sequence is Phosphatidylglycerol--prolipoprotein diacylglyceryl transferase (289 aa).

Transmembrane regions (helical) follow at residues 17–37, 57–77, 89–109, 121–141, 174–194, 200–220, and 235–255; these read LAVR…ILLG, MLFY…IFFY, IFAV…VIAA, WLVV…AGRI, QLYE…IYSA, GAVS…AEFF, and ISMG…MLVW. Arginine 140 contributes to the a 1,2-diacyl-sn-glycero-3-phospho-(1'-sn-glycerol) binding site.

Belongs to the Lgt family.

It localises to the cell inner membrane. It catalyses the reaction L-cysteinyl-[prolipoprotein] + a 1,2-diacyl-sn-glycero-3-phospho-(1'-sn-glycerol) = an S-1,2-diacyl-sn-glyceryl-L-cysteinyl-[prolipoprotein] + sn-glycerol 1-phosphate + H(+). It functions in the pathway protein modification; lipoprotein biosynthesis (diacylglyceryl transfer). Its function is as follows. Catalyzes the transfer of the diacylglyceryl group from phosphatidylglycerol to the sulfhydryl group of the N-terminal cysteine of a prolipoprotein, the first step in the formation of mature lipoproteins. The polypeptide is Phosphatidylglycerol--prolipoprotein diacylglyceryl transferase (Nitrosospira multiformis (strain ATCC 25196 / NCIMB 11849 / C 71)).